Consider the following 142-residue polypeptide: MLQDFKAFINKGNVVDLAVAVIIGAAFGKIVSSLTDDLIMPLIGYFTGGLDFSSHFIRLGEIPANFTGSVTSYADLKNAGVPLIGFGQFITVAVNFLLIAFVVFLVVRAVQRFNKAEEAKPAEPAEDVVLLREILAELKKKG.

Transmembrane regions (helical) follow at residues 14-34 (VVDL…VSSL) and 86-106 (FGQF…VFLV).

Belongs to the MscL family. As to quaternary structure, homopentamer.

It localises to the cell inner membrane. Channel that opens in response to stretch forces in the membrane lipid bilayer. May participate in the regulation of osmotic pressure changes within the cell. This is Large-conductance mechanosensitive channel from Rhizorhabdus wittichii (strain DSM 6014 / CCUG 31198 / JCM 15750 / NBRC 105917 / EY 4224 / RW1) (Sphingomonas wittichii).